A 483-amino-acid chain; its full sequence is Proline--tRNA ligase (483 aa).

The protein belongs to the class-II aminoacyl-tRNA synthetase family. ProS type 3 subfamily. As to quaternary structure, homodimer.

Its subcellular location is the cytoplasm. It carries out the reaction tRNA(Pro) + L-proline + ATP = L-prolyl-tRNA(Pro) + AMP + diphosphate. In terms of biological role, catalyzes the attachment of proline to tRNA(Pro) in a two-step reaction: proline is first activated by ATP to form Pro-AMP and then transferred to the acceptor end of tRNA(Pro). In Sulfolobus acidocaldarius (strain ATCC 33909 / DSM 639 / JCM 8929 / NBRC 15157 / NCIMB 11770), this protein is Proline--tRNA ligase.